A 206-amino-acid chain; its full sequence is FMN-dependent NADH:quinone oxidoreductase 1 (206 aa).

FMN contacts are provided by residues Ser-10 and 16–18 (SLS).

The protein belongs to the azoreductase type 1 family. In terms of assembly, homodimer. The cofactor is FMN.

It carries out the reaction 2 a quinone + NADH + H(+) = 2 a 1,4-benzosemiquinone + NAD(+). It catalyses the reaction N,N-dimethyl-1,4-phenylenediamine + anthranilate + 2 NAD(+) = 2-(4-dimethylaminophenyl)diazenylbenzoate + 2 NADH + 2 H(+). In terms of biological role, quinone reductase that provides resistance to thiol-specific stress caused by electrophilic quinones. Functionally, also exhibits azoreductase activity. Catalyzes the reductive cleavage of the azo bond in aromatic azo compounds to the corresponding amines. This chain is FMN-dependent NADH:quinone oxidoreductase 1, found in Burkholderia lata (strain ATCC 17760 / DSM 23089 / LMG 22485 / NCIMB 9086 / R18194 / 383).